Consider the following 98-residue polypeptide: Large ribosomal subunit protein bL27 (98 aa).

The propeptide occupies 1–10; sequence MELKMNLQLF. Positions 11–30 are disordered; it reads AQKKGTGSSKNGRDSISKRL.

The protein belongs to the bacterial ribosomal protein bL27 family. In terms of processing, the N-terminus is cleaved by ribosomal processing cysteine protease Prp.

This is Large ribosomal subunit protein bL27 from Natranaerobius thermophilus (strain ATCC BAA-1301 / DSM 18059 / JW/NM-WN-LF).